A 402-amino-acid polypeptide reads, in one-letter code: Type II NADH:quinone oxidoreductase (402 aa).

Residues 12-16 (GAGYA), 39-40 (NK), and Val-83 contribute to the FAD site. The active site involves Glu-172. FAD contacts are provided by residues Asp-302, 319 to 320 (AQ), and Lys-379.

The protein belongs to the NADH dehydrogenase family. FAD is required as a cofactor.

Its subcellular location is the cell membrane. The enzyme catalyses a quinone + NADH + H(+) = a quinol + NAD(+). Functionally, alternative, nonproton pumping NADH:quinone oxidoreductase that delivers electrons to the respiratory chain by oxidation of NADH and reduction of quinones, and contributes to the regeneration of NAD(+). This is Type II NADH:quinone oxidoreductase from Staphylococcus epidermidis (strain ATCC 12228 / FDA PCI 1200).